We begin with the raw amino-acid sequence, 292 residues long: 4-hydroxy-tetrahydrodipicolinate synthase (292 aa).

A pyruvate-binding site is contributed by Thr-44. The active-site Proton donor/acceptor is the Tyr-132. Residue Lys-160 is the Schiff-base intermediate with substrate of the active site. Ile-202 lines the pyruvate pocket.

This sequence belongs to the DapA family. In terms of assembly, homotetramer; dimer of dimers.

It is found in the cytoplasm. The catalysed reaction is L-aspartate 4-semialdehyde + pyruvate = (2S,4S)-4-hydroxy-2,3,4,5-tetrahydrodipicolinate + H2O + H(+). Its pathway is amino-acid biosynthesis; L-lysine biosynthesis via DAP pathway; (S)-tetrahydrodipicolinate from L-aspartate: step 3/4. In terms of biological role, catalyzes the condensation of (S)-aspartate-beta-semialdehyde [(S)-ASA] and pyruvate to 4-hydroxy-tetrahydrodipicolinate (HTPA). In Magnetococcus marinus (strain ATCC BAA-1437 / JCM 17883 / MC-1), this protein is 4-hydroxy-tetrahydrodipicolinate synthase.